We begin with the raw amino-acid sequence, 160 residues long: Ribosomal RNA large subunit methyltransferase H (160 aa).

S-adenosyl-L-methionine-binding positions include L76, G108, and 127 to 132 (LGKMTW).

This sequence belongs to the RNA methyltransferase RlmH family. As to quaternary structure, homodimer.

It localises to the cytoplasm. The catalysed reaction is pseudouridine(1915) in 23S rRNA + S-adenosyl-L-methionine = N(3)-methylpseudouridine(1915) in 23S rRNA + S-adenosyl-L-homocysteine + H(+). Specifically methylates the pseudouridine at position 1915 (m3Psi1915) in 23S rRNA. The protein is Ribosomal RNA large subunit methyltransferase H of Rhizobium leguminosarum bv. trifolii (strain WSM2304).